The chain runs to 89 residues: Small ribosomal subunit protein uS15 (89 aa).

Belongs to the universal ribosomal protein uS15 family. In terms of assembly, part of the 30S ribosomal subunit. Forms a bridge to the 50S subunit in the 70S ribosome, contacting the 23S rRNA.

In terms of biological role, one of the primary rRNA binding proteins, it binds directly to 16S rRNA where it helps nucleate assembly of the platform of the 30S subunit by binding and bridging several RNA helices of the 16S rRNA. Forms an intersubunit bridge (bridge B4) with the 23S rRNA of the 50S subunit in the ribosome. This chain is Small ribosomal subunit protein uS15, found in Methylorubrum populi (strain ATCC BAA-705 / NCIMB 13946 / BJ001) (Methylobacterium populi).